The following is a 282-amino-acid chain: 4-diphosphocytidyl-2-C-methyl-D-erythritol kinase (282 aa).

Residue K12 is part of the active site. 95-105 contacts ATP; that stretch reads PMGGGIGGGSS. The active site involves D137.

This sequence belongs to the GHMP kinase family. IspE subfamily.

It carries out the reaction 4-CDP-2-C-methyl-D-erythritol + ATP = 4-CDP-2-C-methyl-D-erythritol 2-phosphate + ADP + H(+). It functions in the pathway isoprenoid biosynthesis; isopentenyl diphosphate biosynthesis via DXP pathway; isopentenyl diphosphate from 1-deoxy-D-xylulose 5-phosphate: step 3/6. Catalyzes the phosphorylation of the position 2 hydroxy group of 4-diphosphocytidyl-2C-methyl-D-erythritol. In Pseudomonas aeruginosa (strain ATCC 15692 / DSM 22644 / CIP 104116 / JCM 14847 / LMG 12228 / 1C / PRS 101 / PAO1), this protein is 4-diphosphocytidyl-2-C-methyl-D-erythritol kinase.